The chain runs to 1724 residues: Protein CHROMATIN REMODELING 5 (1724 aa).

Disordered stretches follow at residues 24–88 (QNAA…QSST) and 104–415 (DCQP…DDIE). Residues 25–34 (NAATFQSSPL) are compositionally biased toward polar residues. Basic and acidic residues predominate over residues 126–144 (EAYHSEDNHSNDRSEKLDS). Residues 138–164 (RSEKLDSENENDNENEEEDNEMNKHQS) adopt a coiled-coil conformation. Acidic residues-rich tracts occupy residues 145 to 157 (ENEN…EEDN), 170 to 186 (PADE…DEDN), 239 to 264 (ADMD…DAAD), and 278 to 297 (VSDE…YEDD). Residues 301 to 313 (KKPKVRQQSKGFR) show a composition bias toward basic residues. The short motif at 320–327 (ERKSFHVS) is the Nuclear localization signal 1 element. Residues 337-350 (QDDDSEEDSENDND) are compositionally biased toward acidic residues. The segment covering 362–376 (TLRQNNGRSTNTIGQ) has biased composition (polar residues). The segment covering 403-412 (DGKNRKNQKD) has biased composition (basic and acidic residues). The Chromo 1 domain occupies 420 to 499 (DVIEKVLWHQ…FKKVLNYTKK (80 aa)). The stretch at 505-525 (RYRTALSREEIEVNDVSKEMD) forms a coiled coil. The Chromo 2 domain maps to 533 to 597 (SQVERIIADR…REVSIAVQGK (65 aa)). Residues 637-809 (VNSWLNDTNV…WALLHFLDPG (173 aa)) enclose the Helicase ATP-binding domain. 650 to 657 (DEMGLGKT) is an ATP binding site. A DEAH box motif is present at residues 760-763 (DEAH). The Helicase C-terminal domain maps to 943-1094 (ILDKLLVRLR…HLVIQKLNAE (152 aa)). Residues 1126-1163 (KEDKNDEESKKRLLSMDIDEILERAEQVEEKHTDETEH) are a coiled coil. A disordered region spans residues 1199-1245 (ALAPRAARNTKSYVDPSHPDRTSKRKKKGSEPPEHTERSQKRRKTEY). 2 consecutive short sequence motifs (nuclear localization signal) follow at residues 1224–1231 (KKKGSEPP) and 1348–1355 (LKRVQGLQ). The span at 1227-1237 (GSEPPEHTERS) shows a compositional bias: basic and acidic residues. Disordered regions lie at residues 1480–1524 (QFKA…EMSD) and 1654–1724 (KFKT…FPPR). Basic and acidic residues predominate over residues 1504 to 1520 (DGPRKTQKAEPLVKEEG). A compositionally biased stretch (polar residues) spans 1658-1667 (AGNSQGSQQV). Positions 1669 to 1691 (KGIDTAKFEAWKRRRRTENDVQT) are enriched in basic and acidic residues. Polar residues predominate over residues 1692 to 1702 (ERPTITNSNSL).

Belongs to the SNF2/RAD54 helicase family.

It is found in the nucleus. Its function is as follows. DNA-binding helicase that specifically binds to the promoter of target genes, leading to chromatin remodeling, possibly by promoting deposition of histone H3.3. Probable chromatin remodeling factor. The chain is Protein CHROMATIN REMODELING 5 from Arabidopsis thaliana (Mouse-ear cress).